A 406-amino-acid chain; its full sequence is Phosphopentomutase (406 aa).

Positions 10, 305, 310, 346, 347, and 358 each coordinate Mn(2+).

Belongs to the phosphopentomutase family. The cofactor is Mn(2+).

It is found in the cytoplasm. It catalyses the reaction 2-deoxy-alpha-D-ribose 1-phosphate = 2-deoxy-D-ribose 5-phosphate. The catalysed reaction is alpha-D-ribose 1-phosphate = D-ribose 5-phosphate. The protein operates within carbohydrate degradation; 2-deoxy-D-ribose 1-phosphate degradation; D-glyceraldehyde 3-phosphate and acetaldehyde from 2-deoxy-alpha-D-ribose 1-phosphate: step 1/2. In terms of biological role, isomerase that catalyzes the conversion of deoxy-ribose 1-phosphate (dRib-1-P) and ribose 1-phosphate (Rib-1-P) to deoxy-ribose 5-phosphate (dRib-5-P) and ribose 5-phosphate (Rib-5-P), respectively. This chain is Phosphopentomutase, found in Allorhizobium ampelinum (strain ATCC BAA-846 / DSM 112012 / S4) (Agrobacterium vitis (strain S4)).